Reading from the N-terminus, the 305-residue chain is Peroxisome biogenesis factor 2 (305 aa).

Residues 1–15 (MASRKENAKSANRVL) lie on the Peroxisomal matrix side of the membrane. Residues 16-42 (RISQLDALELNKALEQLVWSQFTQCFH) form a helical membrane-spanning segment. The Cytoplasmic segment spans residues 43–48 (GFKPGL). A helical membrane pass occupies residues 49 to 74 (LARFEPEVKACLWVFLWRFTIYSKNA). Topologically, residues 75-98 (TVGQSVLNIKYKNDFSPNLRYQPP) are peroxisomal matrix. An N6-acetyllysine modification is found at Lys-84. Residues 99 to 125 (SKNQKIWYAVCTIGGRWLEERCYDLFR) traverse the membrane as a helical segment. Residues 126-133 (NHHLASFG) are Cytoplasmic-facing. The helical transmembrane segment at 134 to 160 (KVKQCVNFVIGLLKLGGLINFLIFLQR) threads the bilayer. Residues 161-187 (GKFATLTERLLGIHSVFCKPQNICEVG) lie on the Peroxisomal matrix side of the membrane. The chain crosses the membrane as a helical span at residues 188 to 211 (FEYMNRELLWHGFAEFLIFLLPLI). The Cytoplasmic portion of the chain corresponds to 212–305 (NVQKLKAKLS…GIEMSEVNAL (94 aa)). Zn(2+) is bound by residues Cys-244, Cys-247, Cys-259, His-261, Cys-264, Cys-267, Cys-280, and Cys-283. The RING-type zinc-finger motif lies at 244-284 (CALCGEWPTMPHTIGCEHIFCYFCAKSSFLFDVYFTCPKCG).

Belongs to the pex2/pex10/pex12 family. In terms of assembly, component of the PEX2-PEX10-PEX12 retrotranslocation channel, composed of PEX2, PEX10 and PEX12. Post-translationally, forms intramolecular and intermolecular disulfide bonds in response to reactive oxygen species (ROS), promoting higher stability.

It localises to the peroxisome membrane. The enzyme catalyses [E2 ubiquitin-conjugating enzyme]-S-ubiquitinyl-L-cysteine + [acceptor protein]-L-cysteine = [E2 ubiquitin-conjugating enzyme]-L-cysteine + [acceptor protein]-S-ubiquitinyl-L-cysteine.. The catalysed reaction is S-ubiquitinyl-[E2 ubiquitin-conjugating enzyme]-L-cysteine + [acceptor protein]-L-lysine = [E2 ubiquitin-conjugating enzyme]-L-cysteine + N(6)-ubiquitinyl-[acceptor protein]-L-lysine.. The protein operates within protein modification; protein ubiquitination. Its function is as follows. E3 ubiquitin-protein ligase component of a retrotranslocation channel required for peroxisome organization by mediating export of the PEX5 receptor from peroxisomes to the cytosol, thereby promoting PEX5 recycling. The retrotranslocation channel is composed of PEX2, PEX10 and PEX12; each subunit contributing transmembrane segments that coassemble into an open channel that specifically allows the passage of PEX5 through the peroxisomal membrane. PEX2 also regulates peroxisome organization by acting as a E3 ubiquitin-protein ligase. PEX2 ubiquitinates PEX5 during its passage through the retrotranslocation channel: catalyzes monoubiquitination of PEX5 at 'Cys-11', a modification that acts as a signal for PEX5 extraction into the cytosol. Required for pexophagy in response to starvation by mediating ubiquitination of peroxisomal proteins, such as PEX5 and ABCD3/PMP70. Also involved in the response to reactive oxygen species (ROS) by mediating 'Lys-48'-linked polyubiquitination and subsequent degradation of PNPLA2/ATGL, thereby regulating lipolysis. This chain is Peroxisome biogenesis factor 2, found in Homo sapiens (Human).